We begin with the raw amino-acid sequence, 154 residues long: Large ribosomal subunit protein uL22 (154 aa).

It belongs to the universal ribosomal protein uL22 family. Part of the 50S ribosomal subunit.

This protein binds specifically to 23S rRNA. It makes multiple contacts with different domains of the 23S rRNA in the assembled 50S subunit and ribosome. Functionally, the globular domain of the protein is located near the polypeptide exit tunnel on the outside of the subunit, while an extended beta-hairpin is found that lines the wall of the exit tunnel in the center of the 70S ribosome. The chain is Large ribosomal subunit protein uL22 from Natronomonas pharaonis (strain ATCC 35678 / DSM 2160 / CIP 103997 / JCM 8858 / NBRC 14720 / NCIMB 2260 / Gabara) (Halobacterium pharaonis).